Here is a 460-residue protein sequence, read N- to C-terminus: NADH-ubiquinone oxidoreductase chain 4 (460 aa).

12 helical membrane passes run proline 20–phenylalanine 42, proline 61–serine 81, glutamine 93–alanine 113, threonine 114–isoleucine 134, threonine 148–leucine 168, isoleucine 195–leucine 215, proline 225–methionine 245, leucine 258–leucine 278, serine 285–isoleucine 304, tryptophan 308–leucine 330, isoleucine 351–proline 371, and isoleucine 394–methionine 414.

Belongs to the complex I subunit 4 family.

It is found in the mitochondrion membrane. The enzyme catalyses a ubiquinone + NADH + 5 H(+)(in) = a ubiquinol + NAD(+) + 4 H(+)(out). Core subunit of the mitochondrial membrane respiratory chain NADH dehydrogenase (Complex I) that is believed to belong to the minimal assembly required for catalysis. Complex I functions in the transfer of electrons from NADH to the respiratory chain. The immediate electron acceptor for the enzyme is believed to be ubiquinone. In Carassius auratus (Goldfish), this protein is NADH-ubiquinone oxidoreductase chain 4 (MT-ND4).